Here is a 769-residue protein sequence, read N- to C-terminus: Serine protease HtrA-like (769 aa).

Residues 1-20 are compositionally biased toward basic residues; it reads MDIGKKHVIPKSQYRRKRRE. A disordered region spans residues 1 to 390; the sequence is MDIGKKHVIP…ATSKLNKGRA (390 aa). 2 stretches are compositionally biased toward basic and acidic residues: residues 21-64 and 71-108; these read FFHN…ERFK and LEQR…DVSK. Residues 126–137 show a composition bias toward polar residues; the sequence is YEQNSEATLSTK. Residues 138 to 186 are compositionally biased toward basic and acidic residues; it reads STDKVESTEMRKLSSDKNKVGHEEQHVLSKPSEHDKETRIDSESSRTDS. Residues 247 to 262 are compositionally biased toward polar residues; that stretch reads QQSQNEQTKTYTYGDS. 2 stretches are compositionally biased toward basic and acidic residues: residues 264–296 and 310–330; these read QNDK…HIVD and KTDD…HKQN. A compositionally biased stretch (polar residues) spans 331–347; it reads ADSSETVGYQSQSTASH. Over residues 348–364 the composition is skewed to basic and acidic residues; sequence RSTEKRNISINDHDKLN. Positions 365–390 are enriched in polar residues; sequence GQKTNTKTSANNNQKKATSKLNKGRA. A helical transmembrane segment spans residues 410-430; sequence LVILMGIIILIVILNAIFNNV. Catalysis depends on charge relay system residues His-504, Asp-534, and Ser-619. One can recognise a PDZ domain in the interval 680–733; the sequence is IVSLNSFERQAVKLPGKVKNGVVVDQVDNNGLADQSGLKKGDVITELDGKLLED.

Belongs to the peptidase S1C family.

It is found in the cell membrane. In Staphylococcus aureus (strain NCTC 8325 / PS 47), this protein is Serine protease HtrA-like.